Here is a 525-residue protein sequence, read N- to C-terminus: Protein-export membrane protein SecD (525 aa).

The next 6 membrane-spanning stretches (helical) occupy residues 16–36 (VLLL…KGLT), 368–388 (QAII…YFHY), 395–415 (IPVA…AALI), 421–441 (LPSI…QIVI), 466–486 (AFFI…FLLV), and 488–508 (FVGT…IGVL).

Belongs to the SecD/SecF family. SecD subfamily. Part of the protein translocation apparatus. Forms a complex with SecF.

The protein resides in the cell membrane. Functionally, involved in protein export. In Thermococcus gammatolerans (strain DSM 15229 / JCM 11827 / EJ3), this protein is Protein-export membrane protein SecD.